Reading from the N-terminus, the 434-residue chain is Mothers against decapentaplegic homolog 9 (434 aa).

The MH1 domain occupies 16–140; that stretch reads PAVKRLLGWK…YRRVETPVLP (125 aa). Zn(2+) is bound by residues cysteine 68, cysteine 113, cysteine 125, and histidine 130. The segment at 171 to 222 is disordered; the sequence is MPHNATYPDSFQQSLGPAPPSSPGHVFPQSPCPTSYPQSPGSPSESDSPYQH. Residues 202–221 show a composition bias toward polar residues; that stretch reads CPTSYPQSPGSPSESDSPYQ. The MH2 domain maps to 236 to 434; that stretch reads WCSVAYYELN…SPHNPISSVS (199 aa).

The protein belongs to the dwarfin/SMAD family. In terms of assembly, interaction with the co-SMAD SMAD4. Interacts with PEBP2-alpha subunit. Interacts with RANBP3L. Post-translationally, phosphorylated on serine by BMP (bone morphogenetic proteins) type 1 receptor kinase. Phosphorylated by activin type I receptor-like kinase-2 (ALK-2).

The protein localises to the cytoplasm. The protein resides in the nucleus. Functionally, transcriptional modulator activated by BMP (bone morphogenetic proteins) type 1 receptor kinase. SMAD9 is a receptor-regulated SMAD (R-SMAD). Has been shown to be activated by activin type I receptor-like kinase-2 (ALK-2) which stimulates heteromerization between SMAD9 and SMAD4. ALK-2 binds TGF-beta, activin and BMP. The sequence is that of Mothers against decapentaplegic homolog 9 (Smad9) from Rattus norvegicus (Rat).